Consider the following 74-residue polypeptide: UPF0352 protein MS1910 (74 aa).

It belongs to the UPF0352 family.

This Mannheimia succiniciproducens (strain KCTC 0769BP / MBEL55E) protein is UPF0352 protein MS1910.